The sequence spans 203 residues: Glutathione S-transferase (203 aa).

In terms of domain architecture, GST N-terminal spans 2–79; it reads PDYKVYYFNV…YLANQVGLAG (78 aa). Glutathione-binding positions include Y8, W39, K43, 49–51, and 63–64; these read GQM and QS. Residues 81 to 203 form the GST C-terminal domain; sequence DDWENLMIDT…YIAKRPITEV (123 aa).

Belongs to the GST superfamily. Sigma family. Homodimer.

The enzyme catalyses RX + glutathione = an S-substituted glutathione + a halide anion + H(+). In terms of biological role, conjugation of reduced glutathione to a wide number of exogenous and endogenous hydrophobic electrophiles. This is Glutathione S-transferase (GstS1) from Anopheles gambiae (African malaria mosquito).